The sequence spans 302 residues: Aurora/IPL1-related protein kinase 2 (302 aa).

Polar residues predominate over residues 1–17 (MENKPQILQTKSKNTPN). A disordered region spans residues 1–23 (MENKPQILQTKSKNTPNKGGKLS). Residues 27-277 (FEIGRPLGKG…LQEVKDHYWV (251 aa)) enclose the Protein kinase domain. Residues 33-41 (LGKGKFGSV) and lysine 56 each bind ATP. The active-site Proton acceptor is the aspartate 150.

Belongs to the protein kinase superfamily. Ser/Thr protein kinase family. In terms of assembly, interacts with zen-4 and icp-1. Part of a complex containing at least air-2; icp-1; csc-1 and bir-1. Interacts with tlk-1 and bmk-1.

The protein localises to the cytoplasm. The protein resides in the cytoskeleton. It localises to the chromosome. It is found in the midbody. It catalyses the reaction L-seryl-[protein] + ATP = O-phospho-L-seryl-[protein] + ADP + H(+). It carries out the reaction L-threonyl-[protein] + ATP = O-phospho-L-threonyl-[protein] + ADP + H(+). Serine/threonine-protein kinase which mediates both meiotic and mitotic chromosome segregation. Required for histone H3 'Ser-10' phosphorylation. Phosphorylates tlk-1 and zen-4. The protein is Aurora/IPL1-related protein kinase 2 (air-2) of Caenorhabditis briggsae.